The chain runs to 675 residues: Acetyl-coenzyme A synthetase 1 (675 aa).

Polar residues predominate over residues 1-10 (MPESTQQSHL). The segment at 1–32 (MPESTQQSHLSLDHEKMQQPPKGFTERSKTKP) is disordered. CoA-binding positions include 212-215 (RGGK) and threonine 331. Residues 407-409 (GEP), 431-436 (DTYWQT), aspartate 522, and arginine 537 contribute to the ATP site. Residue serine 545 coordinates CoA. Position 548 (arginine 548) interacts with ATP. Arginine 609 provides a ligand contact to CoA.

Belongs to the ATP-dependent AMP-binding enzyme family.

It carries out the reaction acetate + ATP + CoA = acetyl-CoA + AMP + diphosphate. The chain is Acetyl-coenzyme A synthetase 1 (ACS1) from Candida albicans (Yeast).